Here is a 60-residue protein sequence, read N- to C-terminus: Large ribosomal subunit protein uL30 (60 aa).

The protein belongs to the universal ribosomal protein uL30 family. As to quaternary structure, part of the 50S ribosomal subunit.

The sequence is that of Large ribosomal subunit protein uL30 from Salinispora arenicola (strain CNS-205).